Consider the following 196-residue polypeptide: Putative NADH dehydrogenase/NAD(P)H nitroreductase XOO4023 (196 aa).

This sequence belongs to the nitroreductase family. HadB/RutE subfamily. FMN serves as cofactor.

The sequence is that of Putative NADH dehydrogenase/NAD(P)H nitroreductase XOO4023 from Xanthomonas oryzae pv. oryzae (strain MAFF 311018).